The sequence spans 237 residues: RING finger protein vilya (237 aa).

The RING-type zinc finger occupies Cys21–Arg69. Residues Met172–Leu237 form a disordered region. The span at Arg180 to Ser195 shows a compositional bias: low complexity. The span at Arg221–Leu237 shows a compositional bias: polar residues.

As to quaternary structure, may interact with itself and with narya and nenya through their RING-type zinc fingers. In terms of tissue distribution, expressed in nurse cell and pro-oocytes (at protein level).

Its subcellular location is the chromosome. Its function is as follows. Required for the formation of DNA double-strand breaks during meiosis together with narya and nenya. In Drosophila melanogaster (Fruit fly), this protein is RING finger protein vilya.